Consider the following 442-residue polypeptide: NADH-quinone oxidoreductase subunit D (442 aa).

It belongs to the complex I 49 kDa subunit family. In terms of assembly, NDH-1 is composed of 14 different subunits. Subunits NuoB, C, D, E, F, and G constitute the peripheral sector of the complex.

It localises to the cell membrane. The enzyme catalyses a quinone + NADH + 5 H(+)(in) = a quinol + NAD(+) + 4 H(+)(out). In terms of biological role, NDH-1 shuttles electrons from NADH, via FMN and iron-sulfur (Fe-S) centers, to quinones in the respiratory chain. The immediate electron acceptor for the enzyme in this species is believed to be a menaquinone. Couples the redox reaction to proton translocation (for every two electrons transferred, four hydrogen ions are translocated across the cytoplasmic membrane), and thus conserves the redox energy in a proton gradient. In Mycolicibacterium vanbaalenii (strain DSM 7251 / JCM 13017 / BCRC 16820 / KCTC 9966 / NRRL B-24157 / PYR-1) (Mycobacterium vanbaalenii), this protein is NADH-quinone oxidoreductase subunit D.